The following is a 54-amino-acid chain: Ovomucoid (54 aa).

Residues 4 to 54 (VDCSEYPKPACTLEHRPLCGSDNKTYGNKCNFCNAVVESNGTLTLSHFGKC) enclose the Kazal-like domain. Disulfide bonds link Cys6/Cys36, Cys14/Cys33, and Cys22/Cys54. N-linked (GlcNAc...) asparagine glycosylation is present at Asn43.

Its subcellular location is the secreted. In Pavo muticus (Green peafowl), this protein is Ovomucoid.